A 201-amino-acid polypeptide reads, in one-letter code: DNA polymerase epsilon subunit C (201 aa).

Disordered stretches follow at residues 102-165 (KKRE…KSTR) and 178-201 (SALD…STDP). Residues 117 to 144 (VVIEEPELHEDDGVEEEEEEDEVSEEEE) show a composition bias toward acidic residues. 2 stretches are compositionally biased toward basic and acidic residues: residues 145 to 164 (PVHN…DKST) and 182 to 201 (VGEH…STDP). 3 positions are modified to phosphoserine: S186, S188, and S189.

As to quaternary structure, DNA polymerase epsilon is a heterotetramer consisting of POL2, DPB2, DPB3 and DPB4.

It localises to the nucleus. In terms of biological role, as accessory component of the DNA polymerase epsilon (DNA polymerase II) participates in chromosomal DNA replication. It is required during synthesis of the leading and lagging DNA strands at the replication fork and binds at/or near replication origins and moves along DNA with the replication fork. It has 3'-5' proofreading exonuclease activity that correct errors arising during DNA replication. It is also involved in DNA synthesis during DNA repair. The protein is DNA polymerase epsilon subunit C (DPB3) of Saccharomyces cerevisiae (strain ATCC 204508 / S288c) (Baker's yeast).